A 551-amino-acid chain; its full sequence is Urocanate hydratase (551 aa).

Residues 48–49 (GG), Gln126, 172–174 (GMG), Glu192, Arg197, 238–239 (NA), 259–263 (QTSAH), 269–270 (YI), and Tyr318 each bind NAD(+). Cys406 is an active-site residue. Gly488 is an NAD(+) binding site.

This sequence belongs to the urocanase family. NAD(+) is required as a cofactor.

The protein localises to the cytoplasm. It carries out the reaction 4-imidazolone-5-propanoate = trans-urocanate + H2O. It functions in the pathway amino-acid degradation; L-histidine degradation into L-glutamate; N-formimidoyl-L-glutamate from L-histidine: step 2/3. Functionally, catalyzes the conversion of urocanate to 4-imidazolone-5-propionate. In Geobacillus kaustophilus (strain HTA426), this protein is Urocanate hydratase.